The following is a 971-amino-acid chain: Exportin-2 (971 aa).

M1 carries the N-acetylmethionine modification. Residues 29-102 (AEKFLESVEG…KANIVHLMLS (74 aa)) enclose the Importin N-terminal domain. Position 112 is a phosphoserine (S112). N6-acetyllysine occurs at positions 574 and 824. S931 is modified (phosphoserine).

It belongs to the XPO2/CSE1 family. In terms of assembly, found in a complex with CSE1L/XPO2, Ran and KPNA2. Binds with high affinity to importin-alpha only in the presence of RanGTP. The complex is dissociated by the combined action of RanBP1 and RanGAP1. Interacts with CFTR.

The protein localises to the cytoplasm. It localises to the nucleus. Its function is as follows. Export receptor for importin-alpha. Mediates importin-alpha re-export from the nucleus to the cytoplasm after import substrates (cargos) have been released into the nucleoplasm. In the nucleus binds cooperatively to importin-alpha and to the GTPase Ran in its active GTP-bound form. Docking of this trimeric complex to the nuclear pore complex (NPC) is mediated through binding to nucleoporins. Upon transit of a nuclear export complex into the cytoplasm, disassembling of the complex and hydrolysis of Ran-GTP to Ran-GDP (induced by RANBP1 and RANGAP1, respectively) cause release of the importin-alpha from the export receptor. CSE1L/XPO2 then return to the nuclear compartment and mediate another round of transport. The directionality of nuclear export is thought to be conferred by an asymmetric distribution of the GTP- and GDP-bound forms of Ran between the cytoplasm and nucleus. This Pongo abelii (Sumatran orangutan) protein is Exportin-2 (CSE1L).